Consider the following 330-residue polypeptide: Thioredoxin domain-containing protein 6 (330 aa).

The region spanning 11-115 is the Thioredoxin domain; the sequence is QVNISTQELW…QKTILDQLEA (105 aa). Positions 157–303 are NDK; it reads ERTCTLAIIK…LFPSLKFSDK (147 aa). Residues 300 to 330 are disordered; sequence FSDKDTEAPQGGEAEATAGPTEALCFPEDVD. Residues 307 to 322 show a composition bias toward low complexity; that stretch reads APQGGEAEATAGPTEA.

It belongs to the NDK family. In terms of assembly, monomer and homodimer. In terms of tissue distribution, detected at very low levels in testis, lung and brain.

Its subcellular location is the cytoplasm. The protein resides in the cytoskeleton. It localises to the cilium axoneme. It is found in the dynein axonemal particle. May be a regulator of microtubule physiology. This chain is Thioredoxin domain-containing protein 6, found in Homo sapiens (Human).